We begin with the raw amino-acid sequence, 223 residues long: Protein-disulfide oxidoreductase DsbI (223 aa).

Residues 26 to 46 (LLWLLMAVAMGALIILAHSFF) traverse the membrane as a helical segment. A disulfide bridge connects residues C55 and C58. The next 2 helical transmembrane spans lie at 59–78 (VYIR…AAIN) and 82–102 (IILK…GLKF). Residues C127 and C153 are joined by a disulfide bond. Residues 198-218 (CMLAFGMCLVLLVIMSGAWAL) traverse the membrane as a helical segment.

This sequence belongs to the DsbB family. DsbI subfamily. Interacts with DsbL.

It localises to the cell inner membrane. Functionally, required for disulfide bond formation in some proteins. Part of a redox system composed of DsbI and DsbL that mediates formation of an essential disulfide bond in AssT. This Escherichia coli O1:K1 / APEC protein is Protein-disulfide oxidoreductase DsbI.